The following is a 469-amino-acid chain: MFNGRPFPVDAFPKIIRNAIYEVEQHTQAPQGLIAASALGVISLACQNRIDVCRLNNLRGPVSLFLMTLAESGERKSTVDKLLMKPLYQLEEDLFEKYTHDLTAWRNDEAIFNIEKKALMSKLKSDIRRNKDHLATNERLKELLTTNPKAPVRFKFLFNDATPAAIKAHLCGHWRSVGIMSDEAGIIFNGYTLNELPFINKMWDGSIFTVERKNEPEKLIRDARITLSLMVQPNVFKGYIDRKGDMAKGIGFFARCLMCQPASTQGNRKISNPIFSNEHLPVFHQRLMEIVNESIIKINENNRICLRFSAEAERHWIEFYNQVESEMRMIGLLYDFKDYASKMAENMARLAALLHYFSGDGGDISVTAVKAAVEIVAWYIEEYIRLFSKKEEFSLDVSEADELYCWIKDYCTQKFSSCIKKNIILQFGPNKFRNRDKANELIRILISQNKIFISSWGKTKIINITHCVF.

This chain is Protein YfjI (yfjI), found in Escherichia coli (strain K12).